Reading from the N-terminus, the 120-residue chain is NAD(P)H-quinone oxidoreductase subunit 3, chloroplastic (120 aa).

Transmembrane regions (helical) follow at residues 9–29 (IFWA…LISG), 64–84 (MFAL…PWAM), and 88–108 (VLGV…IIGS).

The protein belongs to the complex I subunit 3 family. As to quaternary structure, NDH is composed of at least 16 different subunits, 5 of which are encoded in the nucleus.

The protein localises to the plastid. The protein resides in the chloroplast thylakoid membrane. The enzyme catalyses a plastoquinone + NADH + (n+1) H(+)(in) = a plastoquinol + NAD(+) + n H(+)(out). It catalyses the reaction a plastoquinone + NADPH + (n+1) H(+)(in) = a plastoquinol + NADP(+) + n H(+)(out). Functionally, NDH shuttles electrons from NAD(P)H:plastoquinone, via FMN and iron-sulfur (Fe-S) centers, to quinones in the photosynthetic chain and possibly in a chloroplast respiratory chain. The immediate electron acceptor for the enzyme in this species is believed to be plastoquinone. Couples the redox reaction to proton translocation, and thus conserves the redox energy in a proton gradient. The polypeptide is NAD(P)H-quinone oxidoreductase subunit 3, chloroplastic (Drimys granadensis).